The primary structure comprises 169 residues: Thermonuclease (169 aa).

Positions 1 to 26 (MKKITTGLIIVVAAIIVLSIQFMTES) are cleaved as a signal peptide. Active-site residues include Arg-65, Glu-73, and Arg-115.

It belongs to the thermonuclease family. The cofactor is Ca(2+).

The protein localises to the secreted. The enzyme catalyses Endonucleolytic cleavage to nucleoside 3'-phosphates and 3'-phosphooligonucleotide end-products.. Enzyme that catalyzes the hydrolysis of both DNA and RNA at the 5'-position of the phosphodiester bond. The chain is Thermonuclease (nucH) from Staphylococcus hyicus.